The chain runs to 145 residues: Hemoglobin subunit beta (145 aa).

Residues 1–145 (MLTAEEKAAV…VANALAHRYH (145 aa)) form the Globin domain. At Thr-11 the chain carries Phosphothreonine. Phosphoserine is present on Ser-43. Lys-58 bears the N6-acetyllysine mark. His-62 lines the heme b pocket. N6-acetyllysine is present on Lys-81. Residue His-91 participates in heme b binding. The residue at position 92 (Cys-92) is an S-nitrosocysteine.

This sequence belongs to the globin family. Heterotetramer of two alpha chains and two beta chains. As to expression, red blood cells.

Its function is as follows. Involved in oxygen transport from the lung to the various peripheral tissues. In Bos mutus grunniens (Wild yak), this protein is Hemoglobin subunit beta (HBB).